Reading from the N-terminus, the 475-residue chain is Lipoprotein lipase (475 aa).

The first 27 residues, 1-27 (MESKALLLLALAVWLQSLTASRGGVAA), serve as a signal peptide directing secretion. The interval 32 to 53 (RDFIDIESKFALRTPEDTAEDT) is interaction with GPIHBP1. A disulfide bond links C54 and C67. A glycan (N-linked (GlcNAc...) asparagine) is linked at N70. Position 121 is a 3'-nitrotyrosine (Y121). S159 functions as the Nucleophile in the catalytic mechanism. D183 acts as the Charge relay system in catalysis. Position 191 is a 3'-nitrotyrosine (Y191). Residues A194, R197, S199, and D202 each contribute to the Ca(2+) site. C243 and C266 are disulfide-bonded. Positions 243–266 (CNIGEAIRVIAERGLGDVDQLVKC) are essential for determining substrate specificity. The active-site Charge relay system is the H268. 2 disulfides stabilise this stretch: C291/C310 and C302/C305. The PLAT domain maps to 341-464 (FHYQVKIHFS…KGKAPAVFVK (124 aa)). 3'-nitrotyrosine is present on Y343. N386 carries N-linked (GlcNAc...) asparagine glycosylation. Residues 417 to 421 (WSDWW) are important for interaction with lipoprotein particles. The interval 430–434 (KIRVK) is important for heparin binding. Residues 443 to 467 (IFCSREKVSHLQKGKAPAVFVKCHD) are interaction with GPIHBP1. A disulfide bridge connects residues C445 and C465.

This sequence belongs to the AB hydrolase superfamily. Lipase family. In terms of assembly, homodimer. Interacts with GPIHBP1 with 1:1 stoichiometry. Interacts with APOC2; the interaction activates LPL activity in the presence of lipids. Interaction with heparan sulfate proteoglycans is required to protect LPL against loss of activity. Associates with lipoprotein particles in blood plasma. Interacts with LMF1 and SEL1L; interaction with SEL1L is required to prevent aggregation of newly synthesized LPL in the endoplasmic reticulum (ER), and for normal export of LPL from the ER to the extracellular space. Interacts with SORL1; SORL1 acts as a sorting receptor, promoting LPL localization to endosomes and later to lysosomes, leading to degradation of newly synthesized LPL. Post-translationally, tyrosine nitration after lipopolysaccharide (LPS) challenge down-regulates the lipase activity. In terms of tissue distribution, highest levels in the spinal cord.

Its subcellular location is the cell membrane. The protein resides in the secreted. The protein localises to the extracellular space. It is found in the extracellular matrix. The catalysed reaction is a triacylglycerol + H2O = a diacylglycerol + a fatty acid + H(+). It catalyses the reaction a 1,2-diacyl-sn-glycero-3-phosphocholine + H2O = a 2-acyl-sn-glycero-3-phosphocholine + a fatty acid + H(+). It carries out the reaction 1,2,3-tri-(9Z-octadecenoyl)-glycerol + H2O = di-(9Z)-octadecenoylglycerol + (9Z)-octadecenoate + H(+). The enzyme catalyses 1,2-di-(9Z-octadecenoyl)-sn-glycero-3-phosphocholine + H2O = (9Z-octadecenoyl)-sn-glycero-3-phosphocholine + (9Z)-octadecenoate + H(+). The catalysed reaction is 1,2,3-tributanoylglycerol + H2O = dibutanoylglycerol + butanoate + H(+). It catalyses the reaction 1,2-dihexadecanoyl-sn-glycero-3-phosphocholine + H2O = hexadecanoyl-sn-glycero-3-phosphocholine + hexadecanoate + H(+). The apolipoprotein APOC2 acts as a coactivator of LPL activity. Ca(2+) binding promotes protein stability and formation of the active homodimer. Interaction with GPIHBP1 protects LPL against inactivation by ANGPTL4. Functionally, key enzyme in triglyceride metabolism. Catalyzes the hydrolysis of triglycerides from circulating chylomicrons and very low density lipoproteins (VLDL), and thereby plays an important role in lipid clearance from the blood stream, lipid utilization and storage. Although it has both phospholipase and triglyceride lipase activities it is primarily a triglyceride lipase with low but detectable phospholipase activity. Mediates margination of triglyceride-rich lipoprotein particles in capillaries. Recruited to its site of action on the luminal surface of vascular endothelium by binding to GPIHBP1 and cell surface heparan sulfate proteoglycans. This is Lipoprotein lipase (LPL) from Papio anubis (Olive baboon).